The chain runs to 146 residues: Prolactin-inducible protein homolog (146 aa).

The N-terminal stretch at 1 to 28 (MRLFQLLFRASPATLLLVLCLQLGANKA) is a signal peptide. Glutamine 29 is modified (pyrrolidone carboxylic acid). Cystine bridges form between cysteine 65–cysteine 91 and cysteine 89–cysteine 123. A glycan (N-linked (GlcNAc...) asparagine) is linked at asparagine 105.

Belongs to the PIP family. Monomer. Interacts with AZGP1.

It localises to the secreted. The chain is Prolactin-inducible protein homolog (PIP) from Pan troglodytes (Chimpanzee).